A 634-amino-acid polypeptide reads, in one-letter code: Frizzled and smoothened-like protein D (634 aa).

The N-terminal stretch at 1–21 (MINKFKFYLIFLKLILILVNC) is a signal peptide. Residues 22–257 (QNSLNDYGFG…QMDSVINMSK (236 aa)) lie on the Extracellular side of the membrane. One can recognise an FZ domain in the interval 34-178 (DESSICTSYI…LTKYGYTANG (145 aa)). Residues N126, N168, N215, N243, and N254 are each glycosylated (N-linked (GlcNAc...) asparagine). A helical membrane pass occupies residues 258-278 (AMSSISFVLSLFNVITFGLLI). At 279–287 (KKKSKYNVC) the chain is on the cytoplasmic side. The chain crosses the membrane as a helical span at residues 288 to 308 (IALMAIGSSFIYLSDIINYGV). Topologically, residues 309 to 335 (GIEKQLCPEPGRVATQRVDSLCGFTGS) are extracellular. Residues 336-356 (IFHIGITLCVLWSMTMGIVLY) form a helical membrane-spanning segment. At 357–368 (SKIKQFKLPNFR) the chain is on the cytoplasmic side. Residues 369-389 (YFLIGNLSFTVVTLIILASAK) form a helical membrane-spanning segment. Over 390–410 (KFQGGNGFLECWMRDRWYVVA) the chain is Extracellular. Residues 411–431 (IFWIPCGIALLLGVLSICGVI) traverse the membrane as a helical segment. At 432-454 (FEIYKISKNVSLKDSKVVIRELK) the chain is on the cytoplasmic side. Residues 455-475 (PFVLVVTVSASLIYLFVFYFD) traverse the membrane as a helical segment. Residues 476–513 (SESKYDFYKKGVEDYILCLLTSENPLDECYTVGPNFNS) lie on the Extracellular side of the membrane. A helical transmembrane segment spans residues 514–534 (YFMFYFLIRFFGILFFGIFGT). The Cytoplasmic segment spans residues 535 to 634 (SEIARNAWTE…MEIELDSIDI (100 aa)). The segment at 560 to 624 (VSSSTRGGGG…NNNNNDNNNK (65 aa)) is disordered. 2 stretches are compositionally biased toward low complexity: residues 572 to 592 (SGIK…NNST) and 609 to 622 (DNTI…NDNN).

It belongs to the G-protein coupled receptor Fz/Smo family.

It is found in the membrane. In Dictyostelium discoideum (Social amoeba), this protein is Frizzled and smoothened-like protein D (fslD).